We begin with the raw amino-acid sequence, 326 residues long: MTGTVSRRKKIAMIGSGMIGGTMGYLCVLRELADVVLFDVVTGMPEGKALDDSQATSIADTNVSVTSANQYEKIAGSDVVIITAGLTKVPGKSDKEWSRNDLLPFNAKIIREVAQGVKKYCPLAFVIVVTNPLDCMVKCFHEASGLPKNMVCGMANVLDSARFRRFIADQLEISPRDIQATVIGTHGDHMLPLARYVTVSGFPLREFIKKGKMTEAKLAEIVERTKKAGGEIVRLLGQGSAYYAPALSAITMAQAFLKDEKRVLPCSVYCQGEYGLHDMFIGLPAVIGGGGIEQVIELELTHEEQECFRKSVDDVVELNKSLAALG.

Residue 39–60 (DVVTGMPEGKALDDSQATSIAD) coordinates NAD(+). The substrate site is built by R99, N131, and R162. NAD(+) is bound at residue N131. The active-site Proton acceptor is H186.

It belongs to the LDH/MDH superfamily. LDH family. In terms of assembly, homotetramer.

It carries out the reaction (S)-lactate + NAD(+) = pyruvate + NADH + H(+). The protein operates within fermentation; pyruvate fermentation to lactate; (S)-lactate from pyruvate: step 1/1. This is L-lactate dehydrogenase from Toxoplasma gondii.